Reading from the N-terminus, the 284-residue chain is Elongation factor Ts (284 aa).

The segment at 80–83 (TDFV) is involved in Mg(2+) ion dislocation from EF-Tu.

Belongs to the EF-Ts family.

Its subcellular location is the cytoplasm. Its function is as follows. Associates with the EF-Tu.GDP complex and induces the exchange of GDP to GTP. It remains bound to the aminoacyl-tRNA.EF-Tu.GTP complex up to the GTP hydrolysis stage on the ribosome. The sequence is that of Elongation factor Ts from Photobacterium profundum (strain SS9).